A 232-amino-acid polypeptide reads, in one-letter code: Transcriptional regulatory protein CpxR (232 aa).

The Response regulatory domain occupies 3–115; it reads KILLVDDDRE…ELVARIRAIL (113 aa). Asp51 carries the 4-aspartylphosphate modification. The segment at residues 131 to 230 is a DNA-binding region (ompR/PhoB-type); sequence SPTLEVDALS…LRGRGYLMVS (100 aa).

Interacts with cognate sensor kinase CpxA. Phosphorylated by CpxA.

The protein localises to the cytoplasm. With respect to regulation, the two-component system is activated by envelope stress such as overexpression of some (misfolded) periplasmic proteins. In terms of biological role, response regulator member of the two-component regulatory system CpxA/CpxR which responds to envelope stress response by activating or, in some cases, repressing expression of downstream genes. Binds to the promoter regions of various genes in vitro, including ompC, cpxP, ryhB and mrkA and, when CpxR is phosphorylated, pecO. Represses expression of the major pilin of type 3 fimbriae MrkA as well as that of type 1 fimbriae FimA. Repression of expression of MrkA appears to be indirect, mediated by activation of the iron homeostasis regulator RyhB. The protein is Transcriptional regulatory protein CpxR of Klebsiella pneumoniae subsp. pneumoniae (strain HS11286).